Consider the following 709-residue polypeptide: MSKQVFEMIFAGKKLVVETGQVAKQANGSVVVRYGDSTVLTAAVMSKKMSTGDFFPLQVNYEEKMYAAGKFPGGFNKREGRPSTDATLTARLIDRPIRPMFAEGFRNEVQVINTVLSFDENASAPMAAMFGSSLALSISDIPFNGPIAGVQVAYVDGNFIINPTAQEQEASALELTVAGTKEAINMVESGAKELSEEIMLEALLKGHEAVCELIAFQEEIVTAIGKEKAEVELLQVDPELQAEIIATHNIALQAAVQVEEKKAREAATEAVKEVVIGEYEARYAEHEEYDRIMRDVAEILEQMEHAEVRRLITEDKVRPDGRRVDEIRPLDAVIDFLPQVHGSGLFTRGQTQALSVLTLAPMGEAQIIDGLTPEYKKRFMHHYNFPQYSVGETGRYGAAGRREIGHGALGERALEQVLPSLEEFPYAIRLVAEVLESNGSSSQASICAGTLALMAGGVPIKAPVAGIAMGLISDGTNYTVLTDIQGLEDHFGDMDFKVAGTREGITALQMDIKIEGITPQILEEALAQAKKARFEILDVLHGAIAEPRPQLAPTAPKIDMIKIDVDKIKVVIGKGGETIDKIIAETGVKIDIDEEGNVSIFSSDQAAIDRTKDIIASLVREAKVGEVYHAKVVRIEKFGAFVNLFDKTDALVHISEIAWTRTANVADVLEIGEEVDVKVIKIDDKGRVDASMKALLPRPPKADNPKKES.

Mg(2+)-binding residues include Asp489 and Asp495. A KH domain is found at 556 to 615 (PKIDMIKIDVDKIKVVIGKGGETIDKIIAETGVKIDIDEEGNVSIFSSDQAAIDRTKDII). The 69-residue stretch at 625–693 (GEVYHAKVVR…DKGRVDASMK (69 aa)) folds into the S1 motif domain.

It belongs to the polyribonucleotide nucleotidyltransferase family. It depends on Mg(2+) as a cofactor.

Its subcellular location is the cytoplasm. It carries out the reaction RNA(n+1) + phosphate = RNA(n) + a ribonucleoside 5'-diphosphate. In terms of biological role, involved in mRNA degradation. Catalyzes the phosphorolysis of single-stranded polyribonucleotides processively in the 3'- to 5'-direction. This is Polyribonucleotide nucleotidyltransferase from Streptococcus agalactiae serotype III (strain NEM316).